Here is a 462-residue protein sequence, read N- to C-terminus: Cysteine--tRNA ligase (462 aa).

Cysteine 28 is a binding site for Zn(2+). The short motif at 30 to 40 (VTAYDLCHIGH) is the 'HIGH' region element. Zn(2+) is bound by residues cysteine 209, histidine 234, and glutamate 238. The 'KMSKS' region signature appears at 266–270 (KMSKS). Lysine 269 contributes to the ATP binding site.

Belongs to the class-I aminoacyl-tRNA synthetase family. Monomer. It depends on Zn(2+) as a cofactor.

It is found in the cytoplasm. It catalyses the reaction tRNA(Cys) + L-cysteine + ATP = L-cysteinyl-tRNA(Cys) + AMP + diphosphate. In Baumannia cicadellinicola subsp. Homalodisca coagulata, this protein is Cysteine--tRNA ligase.